A 461-amino-acid polypeptide reads, in one-letter code: tRNA modification GTPase MnmE (461 aa).

The (6S)-5-formyl-5,6,7,8-tetrahydrofolate site is built by Arg-20, Glu-85, and Lys-124. Positions Gly-221 to Ser-383 constitute a TrmE-type G domain. A K(+)-binding site is contributed by Asn-231. GTP contacts are provided by residues Asn-231–Thr-236, Ser-250–Thr-256, and Asp-275–Gly-278. Residue Ser-235 participates in Mg(2+) binding. Ser-250, Ile-252, and Thr-255 together coordinate K(+). A Mg(2+)-binding site is contributed by Thr-256. Lys-461 lines the (6S)-5-formyl-5,6,7,8-tetrahydrofolate pocket.

The protein belongs to the TRAFAC class TrmE-Era-EngA-EngB-Septin-like GTPase superfamily. TrmE GTPase family. As to quaternary structure, homodimer. Heterotetramer of two MnmE and two MnmG subunits. The cofactor is K(+).

The protein localises to the cytoplasm. Its function is as follows. Exhibits a very high intrinsic GTPase hydrolysis rate. Involved in the addition of a carboxymethylaminomethyl (cmnm) group at the wobble position (U34) of certain tRNAs, forming tRNA-cmnm(5)s(2)U34. In Parabacteroides distasonis (strain ATCC 8503 / DSM 20701 / CIP 104284 / JCM 5825 / NCTC 11152), this protein is tRNA modification GTPase MnmE.